Reading from the N-terminus, the 434-residue chain is Trigger factor (434 aa).

A PPIase FKBP-type domain is found at 163-248 (GDTAVIDFAG…VHDIKRKELP (86 aa)).

Belongs to the FKBP-type PPIase family. Tig subfamily.

It is found in the cytoplasm. The enzyme catalyses [protein]-peptidylproline (omega=180) = [protein]-peptidylproline (omega=0). Involved in protein export. Acts as a chaperone by maintaining the newly synthesized protein in an open conformation. Functions as a peptidyl-prolyl cis-trans isomerase. This chain is Trigger factor, found in Shouchella clausii (strain KSM-K16) (Alkalihalobacillus clausii).